The chain runs to 383 residues: ATP phosphoribosyltransferase regulatory subunit (383 aa).

It belongs to the class-II aminoacyl-tRNA synthetase family. HisZ subfamily. In terms of assembly, heteromultimer composed of HisG and HisZ subunits.

It is found in the cytoplasm. The protein operates within amino-acid biosynthesis; L-histidine biosynthesis; L-histidine from 5-phospho-alpha-D-ribose 1-diphosphate: step 1/9. Required for the first step of histidine biosynthesis. May allow the feedback regulation of ATP phosphoribosyltransferase activity by histidine. This is ATP phosphoribosyltransferase regulatory subunit from Cupriavidus taiwanensis (strain DSM 17343 / BCRC 17206 / CCUG 44338 / CIP 107171 / LMG 19424 / R1) (Ralstonia taiwanensis (strain LMG 19424)).